The following is a 220-amino-acid chain: Octanoyltransferase (220 aa).

Positions 31–206 (DDTPDEVWLV…ELVTLLDYEQ (176 aa)) constitute a BPL/LPL catalytic domain. Residues 70–77 (RGGQVTYH), 137–139 (SLG), and 150–152 (GLA) each bind substrate. Cys-168 serves as the catalytic Acyl-thioester intermediate.

This sequence belongs to the LipB family.

It is found in the cytoplasm. The catalysed reaction is octanoyl-[ACP] + L-lysyl-[protein] = N(6)-octanoyl-L-lysyl-[protein] + holo-[ACP] + H(+). It functions in the pathway protein modification; protein lipoylation via endogenous pathway; protein N(6)-(lipoyl)lysine from octanoyl-[acyl-carrier-protein]: step 1/2. Functionally, catalyzes the transfer of endogenously produced octanoic acid from octanoyl-acyl-carrier-protein onto the lipoyl domains of lipoate-dependent enzymes. Lipoyl-ACP can also act as a substrate although octanoyl-ACP is likely to be the physiological substrate. This Vibrio campbellii (strain ATCC BAA-1116) protein is Octanoyltransferase.